Consider the following 199-residue polypeptide: Probable nicotinate-nucleotide adenylyltransferase (199 aa).

Belongs to the NadD family.

The enzyme catalyses nicotinate beta-D-ribonucleotide + ATP + H(+) = deamido-NAD(+) + diphosphate. It functions in the pathway cofactor biosynthesis; NAD(+) biosynthesis; deamido-NAD(+) from nicotinate D-ribonucleotide: step 1/1. Its function is as follows. Catalyzes the reversible adenylation of nicotinate mononucleotide (NaMN) to nicotinic acid adenine dinucleotide (NaAD). The sequence is that of Probable nicotinate-nucleotide adenylyltransferase from Chloroherpeton thalassium (strain ATCC 35110 / GB-78).